Consider the following 490-residue polypeptide: NAD/NADP-dependent betaine aldehyde dehydrogenase (490 aa).

3 residues coordinate K(+): T26, I27, and D93. Position 150 to 153 (150 to 153 (GAWN)) interacts with NADPH. K162 (charge relay system) is an active-site residue. 176–179 (KPSE) lines the NADPH pocket. Residue V180 participates in K(+) binding. Residues G209 and 230-233 (GTST) contribute to the NADPH site. L246 contacts K(+). Catalysis depends on E252, which acts as the Proton acceptor. Positions 286 and 387 each coordinate NADPH. Residue C286 is the Nucleophile of the active site. A Cysteine sulfenic acid (-SOH) modification is found at C286. Residues K457 and G460 each coordinate K(+). Residue E464 is the Charge relay system of the active site.

This sequence belongs to the aldehyde dehydrogenase family. Dimer of dimers. Requires K(+) as cofactor.

It catalyses the reaction betaine aldehyde + NAD(+) + H2O = glycine betaine + NADH + 2 H(+). It carries out the reaction betaine aldehyde + NADP(+) + H2O = glycine betaine + NADPH + 2 H(+). Its pathway is amine and polyamine biosynthesis; betaine biosynthesis via choline pathway; betaine from betaine aldehyde: step 1/1. In terms of biological role, involved in the biosynthesis of the osmoprotectant glycine betaine. Catalyzes the irreversible oxidation of betaine aldehyde to the corresponding acid. In P.aeruginosa this reaction is a compulsory step in the assimilation of carbon and nitrogen when bacteria are growing in choline or choline precursors. Can use NADP(+) with similar efficiency to NAD(+), a property that can be used by the bacterium to produce the NADPH needed to combat the oxidative stress imposed by the host defenses. In Pseudomonas aeruginosa (strain ATCC 15692 / DSM 22644 / CIP 104116 / JCM 14847 / LMG 12228 / 1C / PRS 101 / PAO1), this protein is NAD/NADP-dependent betaine aldehyde dehydrogenase.